Reading from the N-terminus, the 446-residue chain is Probable glucuronosyltransferase Os04g0650300 (446 aa).

Residues 1–30 lie on the Cytoplasmic side of the membrane; the sequence is MKLPLLRPLWPMLSPAAGSPDSPPEPSKPS. The chain crosses the membrane as a helical; Signal-anchor for type II membrane protein span at residues 31-51; it reads LPAAWLLLHALFCATSMAVGF. At 52–446 the chain is on the lumenal side; sequence RFSRLIVYLL…TTLLNTEGQH (395 aa). Residue Asn-87 is glycosylated (N-linked (GlcNAc...) asparagine). A disordered region spans residues 425–446; it reads QQDAKPETPLKRTTLLNTEGQH.

Belongs to the glycosyltransferase 43 family.

It localises to the golgi apparatus membrane. Involved in the synthesis of glucuronoxylan hemicellulose in secondary cell walls. The polypeptide is Probable glucuronosyltransferase Os04g0650300 (Oryza sativa subsp. japonica (Rice)).